Reading from the N-terminus, the 389-residue chain is Chalcone synthase 1 (389 aa).

Cysteine 164 is an active-site residue.

The protein belongs to the thiolase-like superfamily. Chalcone/stilbene synthases family.

The catalysed reaction is (E)-4-coumaroyl-CoA + 3 malonyl-CoA + 3 H(+) = 2',4,4',6'-tetrahydroxychalcone + 3 CO2 + 4 CoA. The protein operates within secondary metabolite biosynthesis; flavonoid biosynthesis. Functionally, the primary product of this enzyme is 4,2',4',6'-tetrahydroxychalcone (also termed naringenin-chalcone or chalcone) which can under specific conditions spontaneously isomerize into naringenin. This chain is Chalcone synthase 1 (CHS1), found in Cicer arietinum (Chickpea).